We begin with the raw amino-acid sequence, 166 residues long: Putative 4-hydroxy-4-methyl-2-oxoglutarate aldolase 2 (166 aa).

Alanine 2 carries the post-translational modification N-acetylalanine. Substrate is bound by residues 81–84 (GGNP) and arginine 103. Aspartate 104 lines the a divalent metal cation pocket.

Belongs to the class II aldolase/RraA-like family. As to quaternary structure, homotrimer. It depends on a divalent metal cation as a cofactor.

The enzyme catalyses 4-hydroxy-4-methyl-2-oxoglutarate = 2 pyruvate. The catalysed reaction is oxaloacetate + H(+) = pyruvate + CO2. Its function is as follows. Catalyzes the aldol cleavage of 4-hydroxy-4-methyl-2-oxoglutarate (HMG) into 2 molecules of pyruvate. Also contains a secondary oxaloacetate (OAA) decarboxylase activity due to the common pyruvate enolate transition state formed following C-C bond cleavage in the retro-aldol and decarboxylation reactions. The polypeptide is Putative 4-hydroxy-4-methyl-2-oxoglutarate aldolase 2 (Arabidopsis thaliana (Mouse-ear cress)).